We begin with the raw amino-acid sequence, 444 residues long: Trigger factor (444 aa).

The 86-residue stretch at G185 to F270 folds into the PPIase FKBP-type domain.

Belongs to the FKBP-type PPIase family. Tig subfamily.

It is found in the cytoplasm. The enzyme catalyses [protein]-peptidylproline (omega=180) = [protein]-peptidylproline (omega=0). Functionally, involved in protein export. Acts as a chaperone by maintaining the newly synthesized protein in an open conformation. Functions as a peptidyl-prolyl cis-trans isomerase. This Wolbachia pipientis wMel protein is Trigger factor.